Consider the following 257-residue polypeptide: Paired box protein 1 homolog (257 aa).

Residues 26–37 (TTPSSTSTTPSS) show a composition bias toward low complexity. Positions 26–58 (TTPSSTSTTPSSDNGIQQYSSISTSSGYAPANS) are disordered. Positions 38–52 (DNGIQQYSSISTSSG) are enriched in polar residues. Positions 61 to 187 (KTAEVNQLGG…SSISRILRNK (127 aa)) form a DNA-binding region, paired. A PAI subdomain region spans residues 64-120 (EVNQLGGVFVNGRPLPFEMRCKIVELSRQGTRPCDISRQLKISHGCVSKILTRFSEN). Residues 139–187 (KVVEYIRSLKRSDPGIFAWEIRDRLISADICDRANLPSVSSISRILRNK) are RED subdomain.

It is found in the nucleus. Its function is as follows. Transcription factor. May play a role in pharyngeal cell differentiation. May have a protective role in response to infection by the Gram-negative bacterium Vibrio cholerae. This chain is Paired box protein 1 homolog, found in Caenorhabditis elegans.